Here is a 337-residue protein sequence, read N- to C-terminus: GTP 3',8-cyclase (337 aa).

A Radical SAM core domain is found at methionine 1–leucine 226. Residue arginine 8 participates in GTP binding. [4Fe-4S] cluster contacts are provided by cysteine 15 and cysteine 19. S-adenosyl-L-methionine is bound at residue tyrosine 21. Position 22 (cysteine 22) interacts with [4Fe-4S] cluster. Residue arginine 60 participates in GTP binding. Glycine 64 lines the S-adenosyl-L-methionine pocket. Threonine 91 contributes to the GTP binding site. Serine 115 provides a ligand contact to S-adenosyl-L-methionine. GTP is bound at residue lysine 155. Methionine 189 contributes to the S-adenosyl-L-methionine binding site. [4Fe-4S] cluster is bound by residues cysteine 260 and cysteine 263. Residue arginine 265–arginine 267 participates in GTP binding. Cysteine 277 serves as a coordination point for [4Fe-4S] cluster.

This sequence belongs to the radical SAM superfamily. MoaA family. In terms of assembly, monomer and homodimer. [4Fe-4S] cluster is required as a cofactor.

It catalyses the reaction GTP + AH2 + S-adenosyl-L-methionine = (8S)-3',8-cyclo-7,8-dihydroguanosine 5'-triphosphate + 5'-deoxyadenosine + L-methionine + A + H(+). It functions in the pathway cofactor biosynthesis; molybdopterin biosynthesis. In terms of biological role, catalyzes the cyclization of GTP to (8S)-3',8-cyclo-7,8-dihydroguanosine 5'-triphosphate. The polypeptide is GTP 3',8-cyclase (Crocosphaera subtropica (strain ATCC 51142 / BH68) (Cyanothece sp. (strain ATCC 51142))).